The following is a 122-amino-acid chain: Large ribosomal subunit protein uL14c (122 aa).

It belongs to the universal ribosomal protein uL14 family. As to quaternary structure, part of the 50S ribosomal subunit.

It localises to the plastid. The protein localises to the chloroplast. Functionally, binds to 23S rRNA. In Drimys granadensis, this protein is Large ribosomal subunit protein uL14c.